A 539-amino-acid chain; its full sequence is Glutathione synthetase, chloroplastic (539 aa).

Residues 1–61 (MGSGCSSLSY…SPLRCGRSFK (61 aa)) constitute a chloroplast transit peptide. A substrate-binding site is contributed by Arg193. Glu209 provides a ligand contact to ATP. Glu209 and Asn211 together coordinate Mg(2+). Substrate is bound by residues 213-216 (ISCS), 281-283 (ERN), Gln287, and 335-338 (RSGY). Residues Lys374, 428–437 (KPQREGGGNN), Tyr439, 464–467 (MQRI), and Glu490 contribute to the ATP site. A Mg(2+)-binding site is contributed by Glu432. Arg515 serves as a coordination point for substrate. Residues Lys517 and Glu523 each contribute to the ATP site. 526 to 527 (VA) contributes to the substrate binding site.

Belongs to the eukaryotic GSH synthase family. As to quaternary structure, homodimer. Requires Mg(2+) as cofactor.

Its subcellular location is the plastid. It is found in the chloroplast. It catalyses the reaction gamma-L-glutamyl-L-cysteine + glycine + ATP = glutathione + ADP + phosphate + H(+). The protein operates within sulfur metabolism; glutathione biosynthesis; glutathione from L-cysteine and L-glutamate: step 2/2. This chain is Glutathione synthetase, chloroplastic (GSH2), found in Arabidopsis thaliana (Mouse-ear cress).